Here is a 613-residue protein sequence, read N- to C-terminus: Na(+)/H(+) antiporter NhaA 1 (613 aa).

Residues 1 to 24 (MTEASARTIGPLPSRFSRDPKTPR) are disordered. The tract at residues 1–408 (MTEASARTIG…DPARQDEARV (408 aa)) is na(+)/H(+) antiporter NhaA. 11 helical membrane-spanning segments follow: residues 29 to 49 (AAAA…NSPW), 81 to 101 (GLMA…FVIG), 110 to 130 (AVPV…FLTF), 138 to 158 (QAWG…LAVI), 168 to 188 (IFLL…IALF), 191 to 211 (DDLK…LAMV), 231 to 251 (IALY…AVLI), 300 to 320 (AVGP…NAGV), 337 to 357 (WGIV…ATAL), 377 to 397 (GGAA…DVAI), and 408 to 428 (VGVL…FRIT). Residues 409–613 (GVLIASVLAF…SLIRALEAGR (205 aa)) form the Thioredoxin domain.

The protein in the N-terminal section; belongs to the NhaA Na(+)/H(+) (TC 2.A.33) antiporter family.

Its subcellular location is the cell membrane. The enzyme catalyses Na(+)(in) + 2 H(+)(out) = Na(+)(out) + 2 H(+)(in). Functionally, na(+)/H(+) antiporter that extrudes sodium in exchange for external protons. This chain is Na(+)/H(+) antiporter NhaA 1, found in Mycobacterium sp. (strain JLS).